Reading from the N-terminus, the 216-residue chain is uncharacterized protein (216 aa).

The next 4 helical transmembrane spans lie at Ile5–Ser27, Phe98–Leu120, Val125–Asn147, and Gly185–Gly207.

The protein resides in the cell membrane. This is an uncharacterized protein from Aquifex aeolicus (strain VF5).